The chain runs to 115 residues: Holo-[acyl-carrier-protein] synthase (115 aa).

Positions 8 and 50 each coordinate Mg(2+).

The protein belongs to the P-Pant transferase superfamily. AcpS family. Mg(2+) serves as cofactor.

Its subcellular location is the cytoplasm. It catalyses the reaction apo-[ACP] + CoA = holo-[ACP] + adenosine 3',5'-bisphosphate + H(+). Functionally, transfers the 4'-phosphopantetheine moiety from coenzyme A to a Ser of acyl-carrier-protein. In Pseudarthrobacter chlorophenolicus (strain ATCC 700700 / DSM 12829 / CIP 107037 / JCM 12360 / KCTC 9906 / NCIMB 13794 / A6) (Arthrobacter chlorophenolicus), this protein is Holo-[acyl-carrier-protein] synthase.